Consider the following 219-residue polypeptide: Ribosome hibernation promotion factor (219 aa).

The protein belongs to the HPF/YfiA ribosome-associated protein family. Long HPF subfamily. Interacts with 100S ribosomes.

It is found in the cytoplasm. Required for dimerization of active 70S ribosomes into 100S ribosomes in stationary phase; 100S ribosomes are translationally inactive and sometimes present during exponential growth. This chain is Ribosome hibernation promotion factor, found in Mycobacterium tuberculosis (strain ATCC 25618 / H37Rv).